The sequence spans 161 residues: Nucleotide-binding protein Gura_0717 (161 aa).

The protein belongs to the YajQ family.

Nucleotide-binding protein. In Geotalea uraniireducens (strain Rf4) (Geobacter uraniireducens), this protein is Nucleotide-binding protein Gura_0717.